Consider the following 624-residue polypeptide: tRNA uridine 5-carboxymethylaminomethyl modification enzyme MnmG (624 aa).

Residues glycine 13–glycine 18, valine 125, and serine 180 each bind FAD. Glycine 273–phenylalanine 287 is an NAD(+) binding site. Glutamine 370 contributes to the FAD binding site.

The protein belongs to the MnmG family. As to quaternary structure, homodimer. Heterotetramer of two MnmE and two MnmG subunits. The cofactor is FAD.

It is found in the cytoplasm. Functionally, NAD-binding protein involved in the addition of a carboxymethylaminomethyl (cmnm) group at the wobble position (U34) of certain tRNAs, forming tRNA-cmnm(5)s(2)U34. The polypeptide is tRNA uridine 5-carboxymethylaminomethyl modification enzyme MnmG (Legionella pneumophila (strain Paris)).